A 238-amino-acid polypeptide reads, in one-letter code: Exosome complex exonuclease RRP46 homolog (238 aa).

Residues 174–194 (SRKSASSKEPNQKEEDSERGL) are disordered. Over residues 183–192 (PNQKEEDSER) the composition is skewed to basic and acidic residues.

It belongs to the RNase PH family. In terms of assembly, homodimer or monomer when reduced or oxidized, respectively. Component of the exosome core complex.

The protein localises to the nucleus. Its subcellular location is the nucleolus. Functionally, probable component of the exosome 3'-&gt;5' exoribonuclease complex, a complex that degrades inherently unstable mRNAs containing AU-rich elements (AREs) within their 3'-untranslated regions. May form a homodimer separately from exosome complexes and function in DNA cleavage process. Binds double-stranded DNA (dsDNA) and single-stranded RNA (ssRNA), and possesses hydrolytic DNase and phosphorolytic RNase activities in vitro. The chain is Exosome complex exonuclease RRP46 homolog (RRP46) from Oryza sativa subsp. japonica (Rice).